Here is a 277-residue protein sequence, read N- to C-terminus: 4-hydroxy-3-methylbut-2-enyl diphosphate reductase (277 aa).

Cys-12 contributes to the [4Fe-4S] cluster binding site. His-36 and His-70 together coordinate (2E)-4-hydroxy-3-methylbut-2-enyl diphosphate. Residues His-36 and His-70 each contribute to the dimethylallyl diphosphate site. Residues His-36 and His-70 each contribute to the isopentenyl diphosphate site. Cys-92 is a [4Fe-4S] cluster binding site. His-120 is a (2E)-4-hydroxy-3-methylbut-2-enyl diphosphate binding site. His-120 serves as a coordination point for dimethylallyl diphosphate. His-120 serves as a coordination point for isopentenyl diphosphate. Catalysis depends on Glu-122, which acts as the Proton donor. (2E)-4-hydroxy-3-methylbut-2-enyl diphosphate is bound at residue Thr-160. Residue Cys-188 coordinates [4Fe-4S] cluster. The (2E)-4-hydroxy-3-methylbut-2-enyl diphosphate site is built by Ser-216, Ser-217, Asn-218, and Ser-260. Dimethylallyl diphosphate contacts are provided by Ser-216, Ser-217, Asn-218, and Ser-260. Ser-216, Ser-217, Asn-218, and Ser-260 together coordinate isopentenyl diphosphate.

It belongs to the IspH family. Requires [4Fe-4S] cluster as cofactor.

It carries out the reaction isopentenyl diphosphate + 2 oxidized [2Fe-2S]-[ferredoxin] + H2O = (2E)-4-hydroxy-3-methylbut-2-enyl diphosphate + 2 reduced [2Fe-2S]-[ferredoxin] + 2 H(+). It catalyses the reaction dimethylallyl diphosphate + 2 oxidized [2Fe-2S]-[ferredoxin] + H2O = (2E)-4-hydroxy-3-methylbut-2-enyl diphosphate + 2 reduced [2Fe-2S]-[ferredoxin] + 2 H(+). Its pathway is isoprenoid biosynthesis; dimethylallyl diphosphate biosynthesis; dimethylallyl diphosphate from (2E)-4-hydroxy-3-methylbutenyl diphosphate: step 1/1. It participates in isoprenoid biosynthesis; isopentenyl diphosphate biosynthesis via DXP pathway; isopentenyl diphosphate from 1-deoxy-D-xylulose 5-phosphate: step 6/6. Functionally, catalyzes the conversion of 1-hydroxy-2-methyl-2-(E)-butenyl 4-diphosphate (HMBPP) into a mixture of isopentenyl diphosphate (IPP) and dimethylallyl diphosphate (DMAPP). Acts in the terminal step of the DOXP/MEP pathway for isoprenoid precursor biosynthesis. This Sulfurovum sp. (strain NBC37-1) protein is 4-hydroxy-3-methylbut-2-enyl diphosphate reductase.